Reading from the N-terminus, the 288-residue chain is Zinc finger protein ZAT9 (288 aa).

The C2H2-type 1 zinc finger occupies 4 to 26 (YKCRVCFKSFVNGKALGGHMRSH). Disordered regions lie at residues 20–82 (GGHM…LTRK), 101–123 (SQLG…DTTT), and 189–210 (GGHR…QRSE). Polar residues predominate over residues 37–52 (PSQLSYETESDVSSSD). 2 consecutive C2H2-type zinc fingers follow at residues 173–195 (YKCE…RASH) and 224–246 (HECP…KRSH).

The protein localises to the nucleus. In terms of biological role, probable transcription factor that may be involved in stress responses. In Arabidopsis thaliana (Mouse-ear cress), this protein is Zinc finger protein ZAT9 (ZAT9).